A 51-amino-acid chain; its full sequence is Lantibiotic lacticin-481 (51 aa).

The propeptide occupies 1–24 (MKEQNSFNLLQEVTESELDLILGA). Positions 33–38 (TISHEC) form a cross-link, beta-methyllanthionine (Thr-Cys). 2 cross-links (lanthionine (Ser-Cys)) span residues 35 to 49 (SHEC…VFTC) and 42 to 50 (SWQFVFTCC). Thr48 is subject to (Z)-2,3-didehydrobutyrine.

It belongs to the type A lantibiotic family. Monomer or homodimer. Maturation of lantibiotics involves the enzymatic conversion of Thr, and Ser into dehydrated AA and the formation of thioether bonds with cysteine. This is followed by membrane translocation and cleavage of the modified precursor. In terms of processing, it is established that the 2,3-didehydrobutyrine is the Z-isomer.

Its function is as follows. Lanthionine-containing peptide antibiotic (lantibiotic) active on Gram-positive bacteria. The bactericidal activity of lantibiotics is based on depolarization of energized bacterial cytoplasmic membranes, initiated by the formation of aqueous transmembrane pores. Lacticin 481 is a broad spectrum bacteriocin exhibiting activity against a wide range of lactic acid bacteria and C.tyrobutyricum. The polypeptide is Lantibiotic lacticin-481 (lctA) (Lactococcus lactis subsp. lactis (Streptococcus lactis)).